The primary structure comprises 449 residues: Hyaluronidase (449 aa).

Positions 1–23 are cleaved as a signal peptide; the sequence is MYHLWIKCLAAWIFLKRFNGVHV. Cystine bridges form between Cys-47-Cys-340 and Cys-211-Cys-227. Residues Asn-67 and Asn-103 are each glycosylated (N-linked (GlcNAc...) asparagine). Glu-135 serves as the catalytic Proton donor. A glycan (N-linked (GlcNAc...) asparagine) is linked at Asn-153. Asn-357 carries N-linked (GlcNAc...) asparagine glycosylation. Intrachain disulfides connect Cys-365-Cys-376, Cys-370-Cys-427, and Cys-429-Cys-438. N-linked (GlcNAc...) asparagine glycosylation is present at Asn-401. The 12-residue stretch at 427–438 folds into the EGF-like domain; that stretch reads CQCYQGWQGLYC.

It belongs to the glycosyl hydrolase 56 family. Monomer. As to expression, expressed by the venom gland.

The protein localises to the secreted. It carries out the reaction Random hydrolysis of (1-&gt;4)-linkages between N-acetyl-beta-D-glucosamine and D-glucuronate residues in hyaluronate.. Functionally, snake venom endo-hyaluronidase that degrades hyaluronan to smaller oligosaccharide fragments. In venom, it is not toxic by itself, but increases the diffusion of other venom proteins by degrading the extracellular matrix. In addition, it displays antiedematogenic activity. This chain is Hyaluronidase, found in Echis ocellatus (Ocellated saw-scaled viper).